Reading from the N-terminus, the 519-residue chain is Sorting nexin-2 (519 aa).

Disordered stretches follow at residues 1–20 and 30–103; these read MAAEREPPPLGDGKPTDFEE and STVS…VTPV. 2 stretches are compositionally biased toward low complexity: residues 30–44 and 93–103; these read STVSTLESSPSSPDP and SSETSPAVTPV. The residue at position 97 (S97) is a Phosphoserine. A phosphothreonine mark is found at T101 and T104. Phosphoserine is present on residues S117 and S119. In terms of domain architecture, PX spans 140–269; that stretch reads FDIEIGVSDP…QFLESSELPR (130 aa). The a 1,2-diacyl-sn-glycero-3-phospho-(1D-myo-inositol-3-phosphate) site is built by R183, S185, K211, and R235. Phosphoserine is present on S185. Positions 260-519 are interaction with RhoG; sequence QFLESSELPR…AFLPEAKAIA (260 aa). S277 is subject to Phosphoserine. A membrane-binding amphipathic helix region spans residues 278 to 295; the sequence is GAGILRMVNKAADAVNKM. In terms of domain architecture, BAR spans 299–519; it reads MNESDAWFEE…AFLPEAKAIA (221 aa). Residue K469 is modified to N6-acetyllysine.

It belongs to the sorting nexin family. In terms of assembly, predominantly forms heterodimers with BAR domain-containing sorting nexins SNX5, SNX6 and SNX32; can self-associate to form homodimers. The heterodimers are proposed to self-assemble into helical arrays on the membrane to stabilize and expand local membrane curvature underlying endosomal tubule formation. Thought to be a component of the originally described retromer complex (also called SNX-BAR retromer) which is a pentamer containing the heterotrimeric retromer cargo-selective complex (CSC), also decribed as vacuolar protein sorting subcomplex (VPS) and a heterodimeric membrane-deforming subcomplex formed between SNX1 or SNX2 and SNX5 or SNX6 (also called SNX-BAR subcomplex); the respective CSC and SNX-BAR subcomplexes associate with low affinity. Interacts with SNX5, SNX6, SNX32, VPS26A, VPS29, VPS35, FNBP1, KALRN, RHOG (GDP-bound form).

The protein resides in the early endosome membrane. The protein localises to the cell projection. It localises to the lamellipodium. In terms of biological role, involved in several stages of intracellular trafficking. Interacts with membranes containing phosphatidylinositol 3-phosphate (PtdIns(3P)) or phosphatidylinositol 3,5-bisphosphate (PtdIns(3,5)P2). Acts in part as component of the retromer membrane-deforming SNX-BAR subcomplex. The SNX-BAR retromer mediates retrograde transport of cargo proteins from endosomes to the trans-Golgi network (TGN) and is involved in endosome-to-plasma membrane transport for cargo protein recycling. The SNX-BAR subcomplex functions to deform the donor membrane into a tubular profile called endosome-to-TGN transport carrier (ETC). Can sense membrane curvature and has in vitro vesicle-to-membrane remodeling activity. Required for retrograde endosome-to-TGN transport of TGN38. Promotes KALRN- and RHOG-dependent but retromer-independent membrane remodeling such as lamellipodium formation; the function is dependent on GEF activity of KALRN. The chain is Sorting nexin-2 (SNX2) from Bos taurus (Bovine).